We begin with the raw amino-acid sequence, 185 residues long: dCTP deaminase (185 aa).

DCTP is bound by residues 107 to 112, 131 to 133, Gln-152, Tyr-166, and Gln-176; these read KSTYAR and TLE. Glu-133 (proton donor/acceptor) is an active-site residue.

This sequence belongs to the dCTP deaminase family. As to quaternary structure, homotrimer.

It carries out the reaction dCTP + H2O + H(+) = dUTP + NH4(+). It functions in the pathway pyrimidine metabolism; dUMP biosynthesis; dUMP from dCTP (dUTP route): step 1/2. Its function is as follows. Catalyzes the deamination of dCTP to dUTP. This Wolbachia pipientis wMel protein is dCTP deaminase.